A 258-amino-acid polypeptide reads, in one-letter code: Phosphate import ATP-binding protein PstB (258 aa).

The ABC transporter domain maps to 12-253 (LEVKNLNFYY…PARKETEDYI (242 aa)). Position 44-51 (44-51 (GPSGCGKS)) interacts with ATP.

The protein belongs to the ABC transporter superfamily. Phosphate importer (TC 3.A.1.7) family. As to quaternary structure, the complex is composed of two ATP-binding proteins (PstB), two transmembrane proteins (PstC and PstA) and a solute-binding protein (PstS).

Its subcellular location is the cell inner membrane. The enzyme catalyses phosphate(out) + ATP + H2O = ADP + 2 phosphate(in) + H(+). Functionally, part of the ABC transporter complex PstSACB involved in phosphate import. Responsible for energy coupling to the transport system. The sequence is that of Phosphate import ATP-binding protein PstB from Bordetella parapertussis (strain 12822 / ATCC BAA-587 / NCTC 13253).